Reading from the N-terminus, the 147-residue chain is Anti-sigma F factor (147 aa).

Belongs to the anti-sigma-factor family.

The catalysed reaction is L-seryl-[protein] + ATP = O-phospho-L-seryl-[protein] + ADP + H(+). The enzyme catalyses L-threonyl-[protein] + ATP = O-phospho-L-threonyl-[protein] + ADP + H(+). Binds to sigma F and blocks its ability to form an RNA polymerase holoenzyme (E-sigma F). Phosphorylates SpoIIAA on a serine residue. This phosphorylation may enable SpoIIAA to act as an anti-anti-sigma factor that counteracts SpoIIAB and thus releases sigma F from inhibition. The polypeptide is Anti-sigma F factor (Priestia megaterium (Bacillus megaterium)).